We begin with the raw amino-acid sequence, 109 residues long: Class I hydrophobin SC1 (109 aa).

A signal peptide spans 1-22 (MRFSLAILALPVLAAATAVPRG). Intrachain disulfides connect Cys27-Cys88, Cys34-Cys82, Cys35-Cys69, and Cys89-Cys102.

This sequence belongs to the fungal hydrophobin family. In terms of assembly, self-assembles to form functional amyloid fibrils called rodlets. Self-assembly into fibrillar rodlets occurs spontaneously at hydrophobic:hydrophilic interfaces and the rodlets further associate laterally to form amphipathic monolayers.

The protein resides in the secreted. It localises to the cell wall. Its function is as follows. Aerial growth, conidiation, and dispersal of filamentous fungi in the environment rely upon a capability of their secreting small amphipathic proteins called hydrophobins (HPBs) with low sequence identity. Class I can self-assemble into an outermost layer of rodlet bundles on aerial cell surfaces, conferring cellular hydrophobicity that supports fungal growth, development and dispersal; whereas Class II form highly ordered films at water-air interfaces through intermolecular interactions but contribute nothing to the rodlet structure. SC1 is a dikaryon-specific class I hydrophobin that contributes to the formation of aerial hyphae and fruiting bodies. This chain is Class I hydrophobin SC1, found in Schizophyllum commune (Split gill fungus).